The chain runs to 410 residues: Proteasome-activating nucleotidase (410 aa).

A coiled-coil region spans residues 1–70 (MENNSQNVLK…LRGEIERFRT (70 aa)). Residues 195-200 (GTGKTL) and His-334 each bind ATP. Residues 408-410 (MFG) are docks into pockets in the proteasome alpha-ring to cause gate opening.

The protein belongs to the AAA ATPase family. Homohexamer. The hexameric complex has a two-ring architecture resembling a top hat that caps the 20S proteasome core at one or both ends. Upon ATP-binding, the C-terminus of PAN interacts with the alpha-rings of the proteasome core by binding to the intersubunit pockets.

The protein localises to the cytoplasm. In terms of biological role, ATPase which is responsible for recognizing, binding, unfolding and translocation of substrate proteins into the archaeal 20S proteasome core particle. Is essential for opening the gate of the 20S proteasome via an interaction with its C-terminus, thereby allowing substrate entry and access to the site of proteolysis. Thus, the C-termini of the proteasomal ATPase function like a 'key in a lock' to induce gate opening and therefore regulate proteolysis. Unfolding activity requires energy from ATP hydrolysis, whereas ATP binding alone promotes ATPase-20S proteasome association which triggers gate opening, and supports translocation of unfolded substrates. The polypeptide is Proteasome-activating nucleotidase (Methanothermobacter thermautotrophicus (strain ATCC 29096 / DSM 1053 / JCM 10044 / NBRC 100330 / Delta H) (Methanobacterium thermoautotrophicum)).